The following is a 358-amino-acid chain: Holliday junction branch migration complex subunit RuvB (358 aa).

Residues 1–24 (MSIQTDDFAAPPPKRILSGAPASP) form a disordered region. A large ATPase domain (RuvB-L) region spans residues 5–194 (TDDFAAPPPK…FGIVARLEFY (190 aa)). ATP-binding positions include Leu-33, Arg-34, Gly-75, Lys-78, Thr-79, Thr-80, 141-143 (EDY), Arg-184, Tyr-194, and Arg-231. Thr-79 serves as a coordination point for Mg(2+). A small ATPAse domain (RuvB-S) region spans residues 195 to 265 (SPEELASIVR…IAHRALVMLD (71 aa)). Positions 268–358 (PQGFDLMDRK…GDMFGAMRPE (91 aa)) are head domain (RuvB-H). Positions 304, 323, and 328 each coordinate DNA.

Belongs to the RuvB family. Homohexamer. Forms an RuvA(8)-RuvB(12)-Holliday junction (HJ) complex. HJ DNA is sandwiched between 2 RuvA tetramers; dsDNA enters through RuvA and exits via RuvB. An RuvB hexamer assembles on each DNA strand where it exits the tetramer. Each RuvB hexamer is contacted by two RuvA subunits (via domain III) on 2 adjacent RuvB subunits; this complex drives branch migration. In the full resolvosome a probable DNA-RuvA(4)-RuvB(12)-RuvC(2) complex forms which resolves the HJ.

It is found in the cytoplasm. The catalysed reaction is ATP + H2O = ADP + phosphate + H(+). Functionally, the RuvA-RuvB-RuvC complex processes Holliday junction (HJ) DNA during genetic recombination and DNA repair, while the RuvA-RuvB complex plays an important role in the rescue of blocked DNA replication forks via replication fork reversal (RFR). RuvA specifically binds to HJ cruciform DNA, conferring on it an open structure. The RuvB hexamer acts as an ATP-dependent pump, pulling dsDNA into and through the RuvAB complex. RuvB forms 2 homohexamers on either side of HJ DNA bound by 1 or 2 RuvA tetramers; 4 subunits per hexamer contact DNA at a time. Coordinated motions by a converter formed by DNA-disengaged RuvB subunits stimulates ATP hydrolysis and nucleotide exchange. Immobilization of the converter enables RuvB to convert the ATP-contained energy into a lever motion, pulling 2 nucleotides of DNA out of the RuvA tetramer per ATP hydrolyzed, thus driving DNA branch migration. The RuvB motors rotate together with the DNA substrate, which together with the progressing nucleotide cycle form the mechanistic basis for DNA recombination by continuous HJ branch migration. Branch migration allows RuvC to scan DNA until it finds its consensus sequence, where it cleaves and resolves cruciform DNA. The sequence is that of Holliday junction branch migration complex subunit RuvB from Albidiferax ferrireducens (strain ATCC BAA-621 / DSM 15236 / T118) (Rhodoferax ferrireducens).